The following is a 298-amino-acid chain: Ankyrin repeat domain-containing protein 29 (298 aa).

ANK repeat units lie at residues 8–38 (PLANAVFWAARKGNLALLQLLLNSGRVDVDC), 42–71 (YGTTALMVASYSGHYECVRELIMQGADINL), 75–104 (TGSTALFFASQQGHNEIVKLLFEFGASTEF), 108–137 (DGGTALCAACQFGHSRVVDTLLKNGANVHD), 141–170 (DGATALFLASQEGHVNLIRQLLSSGAKVNQ), 174–203 (DGTAPLWMAAQMGHSEVVKVLLLRGADRDA), 207–236 (DGSTALFKAAHKGHCSVMEELLKFSPSLGI), and 239–268 (NGSTALHAAVMGGSLKAVDLLLKANADPAL).

This Danio rerio (Zebrafish) protein is Ankyrin repeat domain-containing protein 29 (ankrd29).